The following is a 368-amino-acid chain: UPF0284 protein Cyan7425_0342 (368 aa).

Belongs to the UPF0284 family.

In Cyanothece sp. (strain PCC 7425 / ATCC 29141), this protein is UPF0284 protein Cyan7425_0342.